The primary structure comprises 307 residues: GTPase Era (307 aa).

In terms of domain architecture, Era-type G spans arginine 13–proline 180. Residues glycine 21 to serine 28 are G1. Residue glycine 21–serine 28 coordinates GTP. The G2 stretch occupies residues glutamine 47–alanine 51. The segment at aspartate 68–glycine 71 is G3. Residues aspartate 68–isoleucine 72 and asparagine 130–aspartate 133 contribute to the GTP site. The interval asparagine 130–aspartate 133 is G4. Residues isoleucine 159 to alanine 161 are G5. Positions leucine 211–glutamate 288 constitute a KH type-2 domain.

It belongs to the TRAFAC class TrmE-Era-EngA-EngB-Septin-like GTPase superfamily. Era GTPase family. Monomer.

Its subcellular location is the cytoplasm. The protein localises to the cell inner membrane. An essential GTPase that binds both GDP and GTP, with rapid nucleotide exchange. Plays a role in 16S rRNA processing and 30S ribosomal subunit biogenesis and possibly also in cell cycle regulation and energy metabolism. The sequence is that of GTPase Era from Bradyrhizobium sp. (strain ORS 278).